The chain runs to 960 residues: Dynamin-like GTPase OPA1, mitochondrial (960 aa).

The N-terminal 87 residues, 1-87 (MWRAGRAAVA…IKYGYQPRRN (87 aa)), are a transit peptide targeting the mitochondrion. Topologically, residues 88-96 (FWPARLAAR) are mitochondrial matrix. The chain crosses the membrane as a helical span at residues 97 to 113 (LLKLRYIILGSAVGGGY). The Mitochondrial intermembrane segment spans residues 114-770 (TAKKTFDEWK…NAIENMIGPD (657 aa)). Residues 210-254 (SDKEKIDQLQEELLHTQLKYQRILERLEKENKELRKLVLQKDDKG) are a coiled coil. The LQQQIQ motif motif lies at 217–222 (QLQEEL). Lysine 228 is subject to N6-acetyllysine. A Dynamin-type G domain is found at 285-561 (QDHLPRVVVV…FWKMVRESVE (277 aa)). A G1 motif region spans residues 295-302 (GDQSAGKT). 6 residues coordinate GTP: serine 298, glycine 300, lysine 301, threonine 302, serine 303, and glycine 317. Threonine 302 contacts Mg(2+). The segment at 321-324 (MMTR) is G2 motif. Threonine 323 and aspartate 398 together coordinate Mg(2+). Residues 398–401 (DLPG) form a G3 motif region. Positions 467-470 (TKVD) are G4 motif. Lysine 468, aspartate 470, and threonine 503 together coordinate GTP. The G5 motif stretch occupies residues 501–504 (VVTG). Stalk region stretches follow at residues 589–836 (DRNE…IKDT) and 874–928 (CNDV…VKLL). The interval 736-856 (SDKQQWDAAI…KTALNHCNLC (121 aa)) is paddle region. Residues 771–781 (WKKRWMYWKNR) lie within the membrane without spanning it. The Mitochondrial intermembrane portion of the chain corresponds to 782-960 (TQEQCVHNET…AFIEALHQEK (179 aa)). The cysteines at positions 856 and 874 are disulfide-linked. A coiled-coil region spans residues 895 to 960 (RQQLTNTEVR…AFIEALHQEK (66 aa)).

This sequence belongs to the TRAFAC class dynamin-like GTPase superfamily. Dynamin/Fzo/YdjA family. Oligomeric complex consisting of membrane-bound and soluble forms of OPA1. Interacts with RCC1L; RCC1L acts as a guanine nucleotide exchange factor (GEF) for OPA1 by exchanging bound GDP for free GTP. Interacts with CHCHD3 and IMMT; these interactions occur preferentially with soluble OPA1 forms. Interacts with PRELID1. Post-translationally, cleaved by OMA1 or YME1L downstream of the transmembrane region in response to different signals to generate soluble forms. Cleaved by OMA1 at position S1 following stress conditions, generating the short soluble form (Dynamin-like GTPase OPA1, short form; S-OPA1). AFG3L2 is involved in the regulation of OMA1-dependent processing of OPA1. PARL-dependent proteolytic processing releases an antiapoptotic soluble form not required for mitochondrial fusion. In terms of processing, cleavage at position S2 by YME1L is required to mediate oxidative phosphorylation (OXPHOS)-induced mitochondrial fusion. Cleavage occurs in the sequence motif Leu-Gln-Gln-Gln-Ile-Gln (LQQQIQ). Cleavage at position S3 by YME1L is required for membrane tubulation. Detected in brain (at protein level). Detected in brain, brain stem, heart, kidney, liver and skeletal muscle.

The protein localises to the mitochondrion inner membrane. The protein resides in the mitochondrion intermembrane space. The catalysed reaction is GTP + H2O = GDP + phosphate + H(+). Its activity is regulated as follows. Activated by guanine nucleotide exchange factor RCC1L. In terms of biological role, dynamin-related GTPase that is essential for normal mitochondrial morphology by mediating fusion of the mitochondrial inner membranes, regulating cristae morphology and maintaining respiratory chain function. Exists in two forms: the transmembrane, long form (Dynamin-like GTPase OPA1, long form; L-OPA1), which is tethered to the inner mitochondrial membrane, and the short soluble form (Dynamin-like GTPase OPA1, short form; S-OPA1), which results from proteolytic cleavage and localizes in the intermembrane space. Both forms (L-OPA1 and S-OPA1) cooperate to catalyze the fusion of the mitochondrial inner membrane. The equilibrium between L-OPA1 and S-OPA1 is essential: excess levels of S-OPA1, produced by cleavage by OMA1 following loss of mitochondrial membrane potential, lead to an impaired equilibrium between L-OPA1 and S-OPA1, inhibiting mitochondrial fusion. The balance between L-OPA1 and S-OPA1 also influences cristae shape and morphology. Involved in remodeling cristae and the release of cytochrome c during apoptosis. Proteolytic processing by PARL in response to intrinsic apoptotic signals may lead to disassembly of OPA1 oligomers and release of the caspase activator cytochrome C (CYCS) into the mitochondrial intermembrane space. Acts as a regulator of T-helper Th17 cells, which are characterized by cells with fused mitochondria with tight cristae, by mediating mitochondrial membrane remodeling: OPA1 is required for interleukin-17 (IL-17) production. Its role in mitochondrial morphology is required for mitochondrial genome maintenance. Functionally, constitutes the transmembrane long form (L-OPA1) that plays a central role in mitochondrial inner membrane fusion and cristae morphology. L-OPA1 and the soluble short form (S-OPA1) form higher-order helical assemblies that coordinate the fusion of mitochondrial inner membranes. Inner membrane-anchored L-OPA1 molecules initiate membrane remodeling by recruiting soluble S-OPA1 to rapidly polymerize into a flexible cylindrical scaffold encaging the mitochondrial inner membrane. Once at the membrane surface, the formation of S-OPA1 helices induce bilayer curvature. OPA1 dimerization through the paddle region, which inserts into cardiolipin-containing membrane, promotes GTP hydrolysis and the helical assembly of a flexible OPA1 lattice on the membrane, which drives membrane curvature and mitochondrial fusion. Plays a role in the maintenance and remodeling of mitochondrial cristae, some invaginations of the mitochondrial inner membrane that provide an increase in the surface area. Probably acts by forming helical filaments at the inside of inner membrane tubes with the shape and dimensions of crista junctions. The equilibrium between L-OPA1 and S-OPA1 influences cristae shape and morphology: increased L-OPA1 levels promote cristae stacking and elongated mitochondria, while increased S-OPA1 levels correlated with irregular cristae packing and round mitochondria shape. Its function is as follows. Constitutes the soluble short form (S-OPA1) generated by cleavage by OMA1, which plays a central role in mitochondrial inner membrane fusion and cristae morphology. The transmembrane long form (L-OPA1) and the S-OPA1 form higher-order helical assemblies that coordinate the fusion of mitochondrial inner membranes. Inner membrane-anchored L-OPA1 molecules initiate membrane remodeling by recruiting soluble S-OPA1 to rapidly polymerize into a flexible cylindrical scaffold encaging the mitochondrial inner membrane. Once at the membrane surface, the formation of S-OPA1 helices induce bilayer curvature. OPA1 dimerization through the paddle region, which inserts into cardiolipin-containing membrane, promotes GTP hydrolysis and the helical assembly of a flexible OPA1 lattice on the membrane, which drives membrane curvature and mitochondrial fusion. Excess levels of S-OPA1 produced by cleavage by OMA1 following stress conditions that induce loss of mitochondrial membrane potential, lead to an impaired equilibrium between L-OPA1 and S-OPA1, thereby inhibiting mitochondrial fusion. Involved in mitochondrial safeguard in response to transient mitochondrial membrane depolarization by mediating flickering: cleavage by OMA1 leads to excess production of S-OPA1, preventing mitochondrial hyperfusion. Plays a role in the maintenance and remodeling of mitochondrial cristae, some invaginations of the mitochondrial inner membrane that provide an increase in the surface area. Probably acts by forming helical filaments at the inside of inner membrane tubes with the shape and dimensions of crista junctions. The equilibrium between L-OPA1 and S-OPA1 influences cristae shape and morphology: increased L-OPA1 levels promote cristae stacking and elongated mitochondria, while increased S-OPA1 levels correlated with irregular cristae packing and round mitochondria shape. Isoforms that contain the alternative exon 4b are required for mitochondrial genome maintenance, possibly by anchoring the mitochondrial nucleoids to the inner mitochondrial membrane. The sequence is that of Dynamin-like GTPase OPA1, mitochondrial from Mus musculus (Mouse).